Here is a 606-residue protein sequence, read N- to C-terminus: RUN and FYVE domain-containing protein 2 (606 aa).

An RUN domain is found at 37-169 (DSDYPPLQQF…IDANLCVKGE (133 aa)). The stretch at 210–534 (EELNRQLNST…IKEANKALQG (325 aa)) forms a coiled coil. Residues 540–598 (DKEATHCKLCEKEFSLSKRKHHCRNCGEIFCNACSDNELPLPSSPKPVRVCDSCHALLI) form an FYVE-type zinc finger. Residues Cys-546, Cys-549, Cys-562, Cys-565, Cys-570, Cys-573, Cys-590, and Cys-593 each coordinate Zn(2+).

As to quaternary structure, interacts with BMX. Expressed in brain, lung and testis.

The protein localises to the nucleus. This chain is RUN and FYVE domain-containing protein 2 (RUFY2), found in Homo sapiens (Human).